The following is a 156-amino-acid chain: S-ribosylhomocysteine lyase (156 aa).

Fe cation is bound by residues His54, His58, and Cys126.

Belongs to the LuxS family. In terms of assembly, homodimer. Requires Fe cation as cofactor.

It carries out the reaction S-(5-deoxy-D-ribos-5-yl)-L-homocysteine = (S)-4,5-dihydroxypentane-2,3-dione + L-homocysteine. In terms of biological role, involved in the synthesis of autoinducer 2 (AI-2) which is secreted by bacteria and is used to communicate both the cell density and the metabolic potential of the environment. The regulation of gene expression in response to changes in cell density is called quorum sensing. Catalyzes the transformation of S-ribosylhomocysteine (RHC) to homocysteine (HC) and 4,5-dihydroxy-2,3-pentadione (DPD). This chain is S-ribosylhomocysteine lyase, found in Shouchella clausii (strain KSM-K16) (Alkalihalobacillus clausii).